The chain runs to 24 residues: Coenzyme PQQ synthesis protein A (24 aa).

Positions 16 to 20 form a cross-link, pyrroloquinoline quinone (Glu-Tyr); it reads EVTMY.

The protein belongs to the PqqA family.

The protein operates within cofactor biosynthesis; pyrroloquinoline quinone biosynthesis. Its function is as follows. Required for coenzyme pyrroloquinoline quinone (PQQ) biosynthesis. PQQ is probably formed by cross-linking a specific glutamate to a specific tyrosine residue and excising these residues from the peptide. The chain is Coenzyme PQQ synthesis protein A from Pseudomonas fluorescens (strain Pf0-1).